The chain runs to 534 residues: CTP synthase (534 aa).

Residues 1–267 (MTKYIFVTGG…DQIVCDHLKL (267 aa)) are amidoligase domain. S13 lines the CTP pocket. S13 is a binding site for UTP. Residue 14-19 (SIGKGI) participates in ATP binding. Y54 contributes to the L-glutamine binding site. ATP is bound at residue D71. 2 residues coordinate Mg(2+): D71 and E141. Residues 148–150 (DIE), 188–193 (KTKPTQ), and K224 contribute to the CTP site. Residues 188–193 (KTKPTQ) and K224 contribute to the UTP site. Residues 292–534 (KIALVGKYVE…FVTAAVENMK (243 aa)) enclose the Glutamine amidotransferase type-1 domain. Residue G354 coordinates L-glutamine. Catalysis depends on C381, which acts as the Nucleophile; for glutamine hydrolysis. L-glutamine contacts are provided by residues 382 to 385 (LGMQ), E405, and R463. Active-site residues include H508 and E510.

It belongs to the CTP synthase family. In terms of assembly, homotetramer.

The catalysed reaction is UTP + L-glutamine + ATP + H2O = CTP + L-glutamate + ADP + phosphate + 2 H(+). It catalyses the reaction L-glutamine + H2O = L-glutamate + NH4(+). It carries out the reaction UTP + NH4(+) + ATP = CTP + ADP + phosphate + 2 H(+). It participates in pyrimidine metabolism; CTP biosynthesis via de novo pathway; CTP from UDP: step 2/2. With respect to regulation, allosterically activated by GTP, when glutamine is the substrate; GTP has no effect on the reaction when ammonia is the substrate. The allosteric effector GTP functions by stabilizing the protein conformation that binds the tetrahedral intermediate(s) formed during glutamine hydrolysis. Inhibited by the product CTP, via allosteric rather than competitive inhibition. Its function is as follows. Catalyzes the ATP-dependent amination of UTP to CTP with either L-glutamine or ammonia as the source of nitrogen. Regulates intracellular CTP levels through interactions with the four ribonucleotide triphosphates. The sequence is that of CTP synthase from Streptococcus agalactiae serotype Ia (strain ATCC 27591 / A909 / CDC SS700).